Consider the following 29-residue polypeptide: Cytochrome b6-f complex subunit 8 (29 aa).

The helical transmembrane segment at 3-23 (IVSLAWAALMIVFTFSLSLVV) threads the bilayer.

The protein belongs to the PetN family. As to quaternary structure, the 4 large subunits of the cytochrome b6-f complex are cytochrome b6, subunit IV (17 kDa polypeptide, PetD), cytochrome f and the Rieske protein, while the 4 small subunits are PetG, PetL, PetM and PetN. The complex functions as a dimer.

Its subcellular location is the plastid membrane. Functionally, component of the cytochrome b6-f complex, which mediates electron transfer between photosystem II (PSII) and photosystem I (PSI), cyclic electron flow around PSI, and state transitions. This is Cytochrome b6-f complex subunit 8 from Cuscuta exaltata (Tall dodder).